A 752-amino-acid chain; its full sequence is MNQILKEKEQKTAKILVDRNPVPTSFEKWGVPGHFSRSLAKGPKTTTWIWNLHADVHDFDSHTSSLEDISRKIFSAHFGQLSLIFIWLSGMYFHGARFSNYTIWLSNPSLIKPSAQIVWPIVGQEILNADLGGGSQGIQITSGFFHLWRASGITNELELYVTALGGLFMAGLMAFGGWFHYHKAAPKLEWFQNVESMLNHHLAGLLGLGSLSWAGHQIHVSLPINKLLDAGVDPKTIPLPHEFILNRELMSQLYPSFEKGLWPFFSLNWGAYSDFLTFRGGLNPITGSLWMSDIAHHHLAISVLFIVAGHMYRTNWGIGHSIKEILDAHRGPLTGSGHRGLYEALTTSWHANLAINLALFGSLSIIVAHHMYAMPPYPYISIDYPTQLSLFTHHTWIGGFCIVGASAHGAIFMIRDYVPSQHYNNVLDRLIRHRDALISHLNWVCIFLGTHSFGLYIHNDTMRALGRSQDMFSDTAIQLQPIFAQWIQSLHTLAPANTAPNALATTSYVFGGEVVAVANKIAMMPMKLGTADFMVHHIHAFTIHVTLLILLKGVLFARNSRLIPDKANLGFRFPCDGPGRGGTCQVSSWDHVFLGLFWMYNCISVVIFHFSWKMQSDVWGTVSQNSLVSHVVGGNFSQSAITINGWLRDFLWAQASQVIQSYGSSISAYGLMFLAAHFIWAFSLMFLFSGRGYWQELIESIVWAHSKLKIAPTIQPRALSITQGRAVGAAHYLLGGIATTWAFFLSRAISIG.

The next 8 membrane-spanning stretches (helical) occupy residues I73–A96, L159–H182, L198–L222, I294–Y312, W349–Y372, L388–I414, A436–H458, and F533–L551. [4Fe-4S] cluster is bound by residues C575 and C584. A run of 2 helical transmembrane segments spans residues H591–W612 and I666–F688. Position 677 (H677) interacts with chlorophyll a'. Residues M685 and Y693 each coordinate chlorophyll a. Position 694 (W694) interacts with phylloquinone. The chain crosses the membrane as a helical span at residues A726–S746.

The protein belongs to the PsaA/PsaB family. As to quaternary structure, the PsaA/B heterodimer binds the P700 chlorophyll special pair and subsequent electron acceptors. PSI consists of a core antenna complex that captures photons, and an electron transfer chain that converts photonic excitation into a charge separation. The eukaryotic PSI reaction center is composed of at least 11 subunits. P700 is a chlorophyll a/chlorophyll a' dimer, A0 is one or more chlorophyll a, A1 is one or both phylloquinones and FX is a shared 4Fe-4S iron-sulfur center. is required as a cofactor.

The protein localises to the plastid. The protein resides in the chloroplast thylakoid membrane. The catalysed reaction is reduced [plastocyanin] + hnu + oxidized [2Fe-2S]-[ferredoxin] = oxidized [plastocyanin] + reduced [2Fe-2S]-[ferredoxin]. Its function is as follows. PsaA and PsaB bind P700, the primary electron donor of photosystem I (PSI), as well as the electron acceptors A0, A1 and FX. PSI is a plastocyanin/cytochrome c6-ferredoxin oxidoreductase, converting photonic excitation into a charge separation, which transfers an electron from the donor P700 chlorophyll pair to the spectroscopically characterized acceptors A0, A1, FX, FA and FB in turn. Oxidized P700 is reduced on the lumenal side of the thylakoid membrane by plastocyanin or cytochrome c6. In Cyanidium caldarium (Red alga), this protein is Photosystem I P700 chlorophyll a apoprotein A1.